The following is a 133-amino-acid chain: ATP synthase epsilon chain, chloroplastic (133 aa).

The protein belongs to the ATPase epsilon chain family. In terms of assembly, F-type ATPases have 2 components, CF(1) - the catalytic core - and CF(0) - the membrane proton channel. CF(1) has five subunits: alpha(3), beta(3), gamma(1), delta(1), epsilon(1). CF(0) has three main subunits: a, b and c.

The protein localises to the plastid. It localises to the chloroplast thylakoid membrane. Functionally, produces ATP from ADP in the presence of a proton gradient across the membrane. The polypeptide is ATP synthase epsilon chain, chloroplastic (Nicotiana sylvestris (Wood tobacco)).